The sequence spans 358 residues: Putative zinc metalloprotease BH06270 (358 aa).

Residue H7 coordinates Zn(2+). E8 is an active-site residue. H11 serves as a coordination point for Zn(2+). Transmembrane regions (helical) follow at residues 89-111, 282-304, and 332-354; these read ATVFAGPLFNVLFTVVILTFFFF, FLSLLNFTAFLSIGVGLINLFPI, and IIFRLGLCFVLLFMFFALFNDYF. The region spanning 102–177 is the PDZ domain; that stretch reads TVVILTFFFF…IEFKMERSGQ (76 aa).

It belongs to the peptidase M50B family. Requires Zn(2+) as cofactor.

Its subcellular location is the cell inner membrane. The protein is Putative zinc metalloprotease BH06270 of Bartonella henselae (strain ATCC 49882 / DSM 28221 / CCUG 30454 / Houston 1) (Rochalimaea henselae).